We begin with the raw amino-acid sequence, 420 residues long: Protein translocase subunit SecY (420 aa).

Transmembrane regions (helical) follow at residues 9–29, 61–81, 104–124, 141–161, 173–193, 203–223, 257–277, 300–320, 355–375, and 377–397; these read ILIT…PIPG, LSII…MELL, IVRY…SVGL, VFMI…MWIG, ISLI…SGTF, ILML…IIYV, LSGV…STIL, YNIL…SIVF, KLTL…WILV, and AMGV…QVAI.

This sequence belongs to the SecY/SEC61-alpha family. As to quaternary structure, component of the Sec protein translocase complex. Heterotrimer consisting of SecY, SecE and SecG subunits. The heterotrimers can form oligomers, although 1 heterotrimer is thought to be able to translocate proteins. Interacts with the ribosome. Interacts with SecDF, and other proteins may be involved. Interacts with SecA.

It localises to the cell inner membrane. Its function is as follows. The central subunit of the protein translocation channel SecYEG. Consists of two halves formed by TMs 1-5 and 6-10. These two domains form a lateral gate at the front which open onto the bilayer between TMs 2 and 7, and are clamped together by SecE at the back. The channel is closed by both a pore ring composed of hydrophobic SecY resides and a short helix (helix 2A) on the extracellular side of the membrane which forms a plug. The plug probably moves laterally to allow the channel to open. The ring and the pore may move independently. This is Protein translocase subunit SecY from Helicobacter pylori (strain J99 / ATCC 700824) (Campylobacter pylori J99).